The following is a 459-amino-acid chain: Bifunctional protein GlmU (459 aa).

The pyrophosphorylase stretch occupies residues 1–228 (MNFKAIILAA…IEELMGVNSR (228 aa)). Residues 8–11 (LAAG), K22, Q72, and 77–78 (GT) contribute to the UDP-N-acetyl-alpha-D-glucosamine site. Mg(2+) is bound at residue D101. G138, E153, N168, and N226 together coordinate UDP-N-acetyl-alpha-D-glucosamine. Mg(2+) is bound at residue N226. Residues 229-249 (VELSKAEEIMRRRINESHMVN) are linker. An N-acetyltransferase region spans residues 250–459 (GVTIIDTNST…KKNQKDDQSK (210 aa)). 2 residues coordinate UDP-N-acetyl-alpha-D-glucosamine: R331 and K349. H361 functions as the Proton acceptor in the catalytic mechanism. UDP-N-acetyl-alpha-D-glucosamine-binding residues include Y364 and N375. Residues 384 to 385 (NY), S403, T421, and R438 contribute to the acetyl-CoA site.

The protein in the N-terminal section; belongs to the N-acetylglucosamine-1-phosphate uridyltransferase family. It in the C-terminal section; belongs to the transferase hexapeptide repeat family. As to quaternary structure, homotrimer. It depends on Mg(2+) as a cofactor.

The protein localises to the cytoplasm. The catalysed reaction is alpha-D-glucosamine 1-phosphate + acetyl-CoA = N-acetyl-alpha-D-glucosamine 1-phosphate + CoA + H(+). It catalyses the reaction N-acetyl-alpha-D-glucosamine 1-phosphate + UTP + H(+) = UDP-N-acetyl-alpha-D-glucosamine + diphosphate. It functions in the pathway nucleotide-sugar biosynthesis; UDP-N-acetyl-alpha-D-glucosamine biosynthesis; N-acetyl-alpha-D-glucosamine 1-phosphate from alpha-D-glucosamine 6-phosphate (route II): step 2/2. The protein operates within nucleotide-sugar biosynthesis; UDP-N-acetyl-alpha-D-glucosamine biosynthesis; UDP-N-acetyl-alpha-D-glucosamine from N-acetyl-alpha-D-glucosamine 1-phosphate: step 1/1. It participates in bacterial outer membrane biogenesis; LPS lipid A biosynthesis. Functionally, catalyzes the last two sequential reactions in the de novo biosynthetic pathway for UDP-N-acetylglucosamine (UDP-GlcNAc). The C-terminal domain catalyzes the transfer of acetyl group from acetyl coenzyme A to glucosamine-1-phosphate (GlcN-1-P) to produce N-acetylglucosamine-1-phosphate (GlcNAc-1-P), which is converted into UDP-GlcNAc by the transfer of uridine 5-monophosphate (from uridine 5-triphosphate), a reaction catalyzed by the N-terminal domain. The chain is Bifunctional protein GlmU from Clostridioides difficile (strain 630) (Peptoclostridium difficile).